A 654-amino-acid chain; its full sequence is MSMDISDFYQTFFDEADELLADMEQHLLVLQPEAPDAEQLNAIFRAAHSIKGGAGTFGFSVLQETTHLMENLLDEARRGEMQLNTDIINLFLETKDIMQEQLDAYKQSQEPDAASFDYICQALRQLALEAKGETPSAVTRLSVVAKSEPQDEQSRSQSPRRIILSRLKAGEVDLLEEELGHLTTLTDVVKGADSLSAILPGDIAEDDITAVLCFVIEADQITFETVEVSPKISTPPVLKLAAEQAPTGRVEREKTTRSNESTSIRVAVEKVDQLINLVGELVITQSMLAQRSSELDPVNHGDLITSMGQLQRNARDLQESVMSIRMMPMEYVFSRYPRLVRDLAGKLGKQVELTLVGSSTELDKSLIERIIDPLTHLVRNSLDHGIELPEKRLAAGKNSVGNLILSAEHQGGNICIEVTDDGAGLNRERILAKAASQGLTVSENMSDDEVAMLIFAPGFSTAEQVTDVSGRGVGMDVVKRNIQKMGGHVEIQSKQGTGTTIRILLPLTLAILDGMSVRVADEVFILPLNAVMESLQPREADLHPLAGGERVLEVRGEYLPIVELWKVFNVAGAKTEATQGIVVILQSGGRRYALLVDQLIGQHQVVVKNLESNYRKVPGISAATILGDGSVALIVDVSALQAINREQRMANTAA.

The HPt domain maps to 1-105; it reads MSMDISDFYQ…DIMQEQLDAY (105 aa). H48 is subject to Phosphohistidine; by autocatalysis. A Histidine kinase domain is found at 257-509; the sequence is RSNESTSIRV…TIRILLPLTL (253 aa). The 136-residue stretch at 511–646 folds into the CheW-like domain; it reads ILDGMSVRVA…VSALQAINRE (136 aa).

An in vitro complex of CheW/CheA(L)/CheA(S) in a 1:1:1 ratio increases the autophosphorylation of CheA and is required for the binding of CheY, the phosphorylation substrate. This complex accounts for 10% of the total number of molecules.

The protein resides in the cytoplasm. The catalysed reaction is ATP + protein L-histidine = ADP + protein N-phospho-L-histidine.. Involved in the transmission of sensory signals from the chemoreceptors to the flagellar motors. CheA is autophosphorylated; it can transfer its phosphate group to either CheB or CheY. The protein is Chemotaxis protein CheA (cheA) of Escherichia coli (strain K12).